We begin with the raw amino-acid sequence, 339 residues long: Transcription initiation factor IIB (339 aa).

The TFIIB-type zinc-finger motif lies at 39–70 (EELICPVCGSKNIIKDYERAEIVCEMCGCVLQ). Zn(2+) contacts are provided by Cys-43, Cys-46, Cys-62, and Cys-65. Repeat copies occupy residues 156–239 (SELD…SREL) and 250–331 (DYVP…ELTE).

It belongs to the TFIIB family.

Stabilizes TBP binding to an archaeal box-A promoter. Also responsible for recruiting RNA polymerase II to the pre-initiation complex (DNA-TBP-TFIIB). The chain is Transcription initiation factor IIB from Methanococcus maripaludis (strain C7 / ATCC BAA-1331).